Reading from the N-terminus, the 85-residue chain is Large ribosomal subunit protein bL31 (85 aa).

A disordered region spans residues 64–85; it reads KYGMSESQGAGGKGNAKKKDEK.

Belongs to the bacterial ribosomal protein bL31 family. Type A subfamily. Part of the 50S ribosomal subunit.

Functionally, binds the 23S rRNA. This chain is Large ribosomal subunit protein bL31, found in Acaryochloris marina (strain MBIC 11017).